We begin with the raw amino-acid sequence, 105 residues long: Large ribosomal subunit protein P2 (105 aa).

The protein belongs to the eukaryotic ribosomal protein P1/P2 family. As to quaternary structure, P1 and P2 exist as dimers at the large ribosomal subunit. In terms of processing, phosphorylated.

In terms of biological role, plays an important role in the elongation step of protein synthesis. In Leishmania braziliensis, this protein is Large ribosomal subunit protein P2 (LIP2).